The chain runs to 76 residues: Sec-independent protein translocase protein TatA (76 aa).

A helical transmembrane segment spans residues 1–21 (MGSFSIWHWLVVLAIVVLVFG). The tract at residues 41 to 76 (EGMKGAEEESTPPPPAQQVTGHSIKSEIEEKDQTKV) is disordered. Basic and acidic residues predominate over residues 64–76 (IKSEIEEKDQTKV).

This sequence belongs to the TatA/E family. The Tat system comprises two distinct complexes: a TatABC complex, containing multiple copies of TatA, TatB and TatC subunits, and a separate TatA complex, containing only TatA subunits. Substrates initially bind to the TatABC complex, which probably triggers association of the separate TatA complex to form the active translocon.

The protein resides in the cell inner membrane. Its function is as follows. Part of the twin-arginine translocation (Tat) system that transports large folded proteins containing a characteristic twin-arginine motif in their signal peptide across membranes. TatA could form the protein-conducting channel of the Tat system. The polypeptide is Sec-independent protein translocase protein TatA (Nitrosomonas europaea (strain ATCC 19718 / CIP 103999 / KCTC 2705 / NBRC 14298)).